Reading from the N-terminus, the 101-residue chain is Interleukin-8 (101 aa).

Positions 1–22 (MTSKLAVALLAAFVLSAALCEA) are cleaved as a signal peptide. R27 bears the Citrulline mark. 2 cysteine pairs are disulfide-bonded: C34-C61 and C36-C77.

Belongs to the intercrine alpha (chemokine CxC) family. As to quaternary structure, homodimer. Interacts with TNFAIP6 (via Link domain); this interaction interferes with chemokine binding to glycosaminoglycans. Citrullination at Arg-27 prevents proteolysis, and dampens tissue inflammation, it also enhances leukocytosis, possibly through impaired chemokine clearance from the blood circulation.

Its subcellular location is the secreted. Its function is as follows. Chemotactic factor that mediates inflammatory response by attracting neutrophils, basophils, and T-cells to clear pathogens and protect the host from infection. Also plays an important role in neutrophil activation. Released in response to an inflammatory stimulus, exerts its effect by binding to the G-protein-coupled receptors CXCR1 and CXCR2, primarily found in neutrophils, monocytes and endothelial cells. G-protein heterotrimer (alpha, beta, gamma subunits) constitutively binds to CXCR1/CXCR2 receptor and activation by IL8 leads to beta and gamma subunits release from Galpha (GNAI2 in neutrophils) and activation of several downstream signaling pathways including PI3K and MAPK pathways. This Canis lupus familiaris (Dog) protein is Interleukin-8 (CXCL8).